The following is a 221-amino-acid chain: Transcription factor bHLH148 (221 aa).

Disordered stretches follow at residues 1-45 and 70-89; these read MASL…GEIH and LNSS…GKAV. 2 stretches are compositionally biased toward low complexity: residues 26–41 and 72–82; these read SASS…SSVS and SSASTSSSPTA. The bHLH domain occupies 148 to 197; that stretch reads KRRVSVLRLNKKSIPDVNRKVRVLGRLVPGCGKQSVPVILEEATDYIQAL.

In terms of assembly, homodimer. Interacts with PRE3. Binds to RSA1.

It is found in the nucleus. Functionally, bHLH transcription factor that binds DNA on specific sequence 5'-CANNTG-3' in target gene promoters. Negatively regulates brassinosteroid signaling. Together with BHLH148/RITF1, regulates the transcription of several genes involved in the detoxification of reactive oxygen species (ROS) generated by salt (NaCl) stress. Confers tolerance to salt and to the oxidative stress-inducing reagents hydrogen peroxide H(2)O(2) and methyl viologen (MV). This chain is Transcription factor bHLH148, found in Arabidopsis thaliana (Mouse-ear cress).